The primary structure comprises 250 residues: Ribosomal RNA small subunit methyltransferase J (250 aa).

S-adenosyl-L-methionine is bound by residues 96–97 and Asp168; that span reads RD.

This sequence belongs to the methyltransferase superfamily. RsmJ family.

The protein localises to the cytoplasm. The enzyme catalyses guanosine(1516) in 16S rRNA + S-adenosyl-L-methionine = N(2)-methylguanosine(1516) in 16S rRNA + S-adenosyl-L-homocysteine + H(+). Functionally, specifically methylates the guanosine in position 1516 of 16S rRNA. The protein is Ribosomal RNA small subunit methyltransferase J of Neisseria gonorrhoeae (strain NCCP11945).